The sequence spans 485 residues: tRNA sulfurtransferase (485 aa).

The region spanning 61-165 (EELIALLQRI…DDKMMLVKAR (105 aa)) is the THUMP domain. ATP-binding positions include 183-184 (LI), lysine 265, glycine 287, and glutamine 296. A disulfide bond links cysteine 344 and cysteine 456. Positions 404 to 483 (LSENEVILDI…FSNVRVFAKK (80 aa)) constitute a Rhodanese domain. Cysteine 456 acts as the Cysteine persulfide intermediate in catalysis.

It belongs to the ThiI family.

Its subcellular location is the cytoplasm. It catalyses the reaction [ThiI sulfur-carrier protein]-S-sulfanyl-L-cysteine + a uridine in tRNA + 2 reduced [2Fe-2S]-[ferredoxin] + ATP + H(+) = [ThiI sulfur-carrier protein]-L-cysteine + a 4-thiouridine in tRNA + 2 oxidized [2Fe-2S]-[ferredoxin] + AMP + diphosphate. The enzyme catalyses [ThiS sulfur-carrier protein]-C-terminal Gly-Gly-AMP + S-sulfanyl-L-cysteinyl-[cysteine desulfurase] + AH2 = [ThiS sulfur-carrier protein]-C-terminal-Gly-aminoethanethioate + L-cysteinyl-[cysteine desulfurase] + A + AMP + 2 H(+). Its pathway is cofactor biosynthesis; thiamine diphosphate biosynthesis. Functionally, catalyzes the ATP-dependent transfer of a sulfur to tRNA to produce 4-thiouridine in position 8 of tRNAs, which functions as a near-UV photosensor. Also catalyzes the transfer of sulfur to the sulfur carrier protein ThiS, forming ThiS-thiocarboxylate. This is a step in the synthesis of thiazole, in the thiamine biosynthesis pathway. The sulfur is donated as persulfide by IscS. This Haemophilus influenzae (strain PittEE) protein is tRNA sulfurtransferase.